A 301-amino-acid polypeptide reads, in one-letter code: Sulfate adenylyltransferase subunit 2 (301 aa).

It belongs to the PAPS reductase family. CysD subfamily. In terms of assembly, heterodimer composed of CysD, the smaller subunit, and CysN.

The catalysed reaction is sulfate + ATP + H(+) = adenosine 5'-phosphosulfate + diphosphate. It participates in sulfur metabolism; hydrogen sulfide biosynthesis; sulfite from sulfate: step 1/3. In terms of biological role, with CysN forms the ATP sulfurylase (ATPS) that catalyzes the adenylation of sulfate producing adenosine 5'-phosphosulfate (APS) and diphosphate, the first enzymatic step in sulfur assimilation pathway. APS synthesis involves the formation of a high-energy phosphoric-sulfuric acid anhydride bond driven by GTP hydrolysis by CysN coupled to ATP hydrolysis by CysD. The chain is Sulfate adenylyltransferase subunit 2 from Geobacter metallireducens (strain ATCC 53774 / DSM 7210 / GS-15).